Consider the following 437-residue polypeptide: Probable D-serine dehydratase (437 aa).

N6-(pyridoxal phosphate)lysine is present on Lys-106.

It belongs to the serine/threonine dehydratase family. DsdA subfamily. Pyridoxal 5'-phosphate is required as a cofactor.

It catalyses the reaction D-serine = pyruvate + NH4(+). In Hahella chejuensis (strain KCTC 2396), this protein is Probable D-serine dehydratase.